The primary structure comprises 448 residues: Vicilin Cor a 11.0101 (448 aa).

Residues 1–44 (MLPKEDPELKKCKHKCRDERQFDEQQRRDGKQICEEKARERQQE) are compositionally biased toward basic and acidic residues. The interval 1-66 (MLPKEDPELK…QEENPYVFQD (66 aa)) is disordered. Residue asparagine 47 is glycosylated (N-linked (GlcNAc...) asparagine). Cupin type-1 domains follow at residues 84 to 220 (ENFT…EQLE) and 263 to 418 (INLL…REVE). N-linked (GlcNAc...) asparagine glycosylation is present at asparagine 301. Cu cation contacts are provided by cysteine 333, histidine 335, and histidine 362.

It belongs to the 7S seed storage protein family. As to quaternary structure, homotrimer. Homohexamer. Post-translationally, N-glycosylated at Asn-301 mostly with xylosylated paucimannosidic-type N-glycan MMX (an N-linked glycan with beta-1,2-xylose residue in the structure) and also with MMXF (a complex N-linked glycan with alpha-1,3-fucose and beta-1,2-xylose residues in the structure). In terms of processing, a mixture of proteolytically processed and unprocessed subunits exist. In terms of tissue distribution, expressed in seed (at protein level). Expressed in seed.

Seed storage protein. Does not have superoxide dismutase (SOD) activity. In Corylus avellana (European hazel), this protein is Vicilin Cor a 11.0101.